We begin with the raw amino-acid sequence, 248 residues long: 1-(5-phosphoribosyl)-5-[(5-phosphoribosylamino)methylideneamino] imidazole-4-carboxamide isomerase (248 aa).

Asp8 (proton acceptor) is an active-site residue. Residue Asp129 is the Proton donor of the active site.

Belongs to the HisA/HisF family.

It localises to the cytoplasm. The catalysed reaction is 1-(5-phospho-beta-D-ribosyl)-5-[(5-phospho-beta-D-ribosylamino)methylideneamino]imidazole-4-carboxamide = 5-[(5-phospho-1-deoxy-D-ribulos-1-ylimino)methylamino]-1-(5-phospho-beta-D-ribosyl)imidazole-4-carboxamide. The protein operates within amino-acid biosynthesis; L-histidine biosynthesis; L-histidine from 5-phospho-alpha-D-ribose 1-diphosphate: step 4/9. The polypeptide is 1-(5-phosphoribosyl)-5-[(5-phosphoribosylamino)methylideneamino] imidazole-4-carboxamide isomerase (Desulfitobacterium hafniense (strain Y51)).